Reading from the N-terminus, the 483-residue chain is ATP synthase subunit beta (483 aa).

169 to 176 (GGAGVGKT) is a binding site for ATP.

It belongs to the ATPase alpha/beta chains family. F-type ATPases have 2 components, CF(1) - the catalytic core - and CF(0) - the membrane proton channel. CF(1) has five subunits: alpha(3), beta(3), gamma(1), delta(1), epsilon(1). CF(0) has three main subunits: a(1), b(2) and c(9-12). The alpha and beta chains form an alternating ring which encloses part of the gamma chain. CF(1) is attached to CF(0) by a central stalk formed by the gamma and epsilon chains, while a peripheral stalk is formed by the delta and b chains.

The protein localises to the cell membrane. It carries out the reaction ATP + H2O + 4 H(+)(in) = ADP + phosphate + 5 H(+)(out). In terms of biological role, produces ATP from ADP in the presence of a proton gradient across the membrane. The catalytic sites are hosted primarily by the beta subunits. The chain is ATP synthase subunit beta from Corynebacterium glutamicum (strain R).